The chain runs to 138 residues: ATP synthase epsilon chain (138 aa).

Belongs to the ATPase epsilon chain family. As to quaternary structure, F-type ATPases have 2 components, CF(1) - the catalytic core - and CF(0) - the membrane proton channel. CF(1) has five subunits: alpha(3), beta(3), gamma(1), delta(1), epsilon(1). CF(0) has three main subunits: a, b and c.

The protein localises to the cell membrane. Functionally, produces ATP from ADP in the presence of a proton gradient across the membrane. This chain is ATP synthase epsilon chain, found in Streptococcus equinus (Streptococcus bovis).